Consider the following 625-residue polypeptide: Basic helix-loop-helix ARNT-like protein 1 (625 aa).

The segment at 1-60 (MADQRMDISSTISDFMSPGPTDLLSSSLGTSGVDCNRKRKGSSTDYQESMDTDKDDPHGR) is disordered. Position 17 is a phosphoserine; by GSK3-beta (S17). Residues 17–32 (SPGPTDLLSSSLGTSG) show a composition bias toward low complexity. Phosphothreonine; by GSK3-beta is present on T21. The Nuclear localization signal signature appears at 36–41 (NRKRKG). Residues 51-60 (DTDKDDPHGR) are compositionally biased toward basic and acidic residues. Positions 72-125 (NAREAHSQIEKRRRDKMNSFIDELASLVPTCNAMSRKLDKLTVLRMAVQHMKTL) constitute a bHLH domain. Position 78 is a phosphoserine (S78). S90 is subject to Phosphoserine; by CK2. Residues 142 to 152 (LSDDELKHLIL) carry the Nuclear export signal 1 motif. Residues 143 to 215 (SDDELKHLIL…EQLSSSDTAP (73 aa)) form the PAS 1 domain. A Glycyl lysine isopeptide (Lys-Gly) (interchain with G-Cter in SUMO2 and SUMO3) cross-link involves residue K252. A Glycyl lysine isopeptide (Lys-Gly) (interchain with G-Cter in SUMO); alternate cross-link involves residue K259. K259 participates in a covalent cross-link: Glycyl lysine isopeptide (Lys-Gly) (interchain with G-Cter in SUMO2); alternate. The 71-residue stretch at 325–395 (PQPVNGEIRV…ECHRQVLQTR (71 aa)) folds into the PAS 2 domain. A Nuclear export signal 2 motif is present at residues 360-368 (LAYLPQELL). Residues 400-443 (TNCYKFKIKDGSFITLRSRWFSFMNPWTKEVEYIVSTNTVVLAN) enclose the PAC domain. Disordered regions lie at residues 454 to 491 (QLTA…RAGA) and 510 to 594 (GSSP…SPSN). Residues 507 to 587 (RIRGSSPSSC…IGIDMIDNDQ (81 aa)) form an interaction with CIART region. Residues 510–520 (GSSPSSCGSSP) are compositionally biased toward low complexity. K537 carries the N6-acetyllysine modification.

Component of the circadian clock oscillator which includes the CRY1/2 proteins, CLOCK or NPAS2, BMAL1 or BMAL2, CSNK1D and/or CSNK1E, TIMELESS and the PER1/2/3 proteins. Forms a heterodimer with CLOCK. The CLOCK-BMAL1 heterodimer is required for E-box-dependent transactivation, for CLOCK nuclear translocation and degradation, and, for phosphorylation of both CLOCK and BMAL1. Part of a nuclear complex which also includes RACK1 and PRKCA; RACK1 and PRKCA are recruited to the complex in a circadian manner. Interacts with NPAS2. Interacts with EZH2. Interacts with SUMO3. Interacts with SIRT1. Interacts with AHR. Interacts with ID1, ID2 and ID3. Interacts with DDX4. Interacts with OGT. Interacts with EED and SUZ12. Interacts with MTA1. Interacts with CIART. Interacts with HSP90. Interacts with KAT2B and EP300. Interacts with BHLHE40/DEC1 and BHLHE41/DEC2. Interacts with RELB and the interaction is enhanced in the presence of CLOCK. Interacts with PER1, PER2, CRY1 and CRY2 and this interaction requires a translocation to the nucleus. Interaction of the CLOCK-BMAL1 heterodimer with PER or CRY inhibits transcription activation. Interaction of the CLOCK-BMAL1 with CRY1 is independent of DNA but with PER2 is off DNA. The CLOCK-BMAL1 heterodimer interacts with GSK3B. Interacts with KDM5A. Interacts with KMT2A; in a circadian manner. Interacts with UBE3A. Interacts with PRKCG. Interacts with MAGEL2. Interacts with NCOA2. Interacts with THRAP3. The CLOCK-BMAL1 heterodimer interacts with PASD1. Interacts with PASD1. Interacts with USP9X. Interacts with PIWIL2 (via PIWI domain). Interacts with HDAC3. Interacts with HNF4A. Ubiquitinated, leading to its proteasomal degradation. Deubiquitinated by USP9X. Post-translationally, O-glycosylated; contains O-GlcNAc. O-glycosylation by OGT prevents protein degradation by inhibiting ubiquitination. It also stabilizes the CLOCK-BMAL1 heterodimer thereby increasing CLOCK-BMAL1-mediated transcription of genes in the negative loop of the circadian clock such as PER1/2/3 and CRY1/2. In terms of processing, acetylated on Lys-537 by CLOCK during the repression phase of the circadian cycle. Acetylation facilitates recruitment of CRY1 protein and initiates the repression phase of the circadian cycle. Acetylated at Lys-537 by KAT5 during the activation phase of the cycle, leading to recruitment of the positive transcription elongation factor b (P-TEFb) and BRD4, followed by productive elongation of circadian transcripts. Deacetylated by SIRT1, which may result in decreased protein stability. Phosphorylated upon dimerization with CLOCK. Phosphorylation enhances the transcriptional activity, alters the subcellular localization and decreases the stability of the CLOCK-BMAL1 heterodimer by promoting its degradation. Phosphorylation shows circadian variations in the liver with a peak between CT10 to CT14. Phosphorylation at Ser-90 by CK2 is essential for its nuclear localization, its interaction with CLOCK and controls CLOCK nuclear entry. Dephosphorylation at Ser-78 is important for dimerization with CLOCK and transcriptional activity. Post-translationally, sumoylated on Lys-259 upon dimerization with CLOCK. Predominantly conjugated to poly-SUMO2/3 rather than SUMO1 and the level of these conjugates undergo rhythmic variation, peaking at CT9-CT12. Sumoylation localizes it exclusively to the PML body and promotes its ubiquitination in the PML body, ubiquitin-dependent proteasomal degradation and the transcriptional activity of the CLOCK-BMAL1 heterodimer. In terms of processing, undergoes lysosome-mediated degradation in a time-dependent manner in the liver.

Its subcellular location is the nucleus. It localises to the cytoplasm. It is found in the PML body. Its function is as follows. Transcriptional activator which forms a core component of the circadian clock. The circadian clock, an internal time-keeping system, regulates various physiological processes through the generation of approximately 24 hour circadian rhythms in gene expression, which are translated into rhythms in metabolism and behavior. It is derived from the Latin roots 'circa' (about) and 'diem' (day) and acts as an important regulator of a wide array of physiological functions including metabolism, sleep, body temperature, blood pressure, endocrine, immune, cardiovascular, and renal function. Consists of two major components: the central clock, residing in the suprachiasmatic nucleus (SCN) of the brain, and the peripheral clocks that are present in nearly every tissue and organ system. Both the central and peripheral clocks can be reset by environmental cues, also known as Zeitgebers (German for 'timegivers'). The predominant Zeitgeber for the central clock is light, which is sensed by retina and signals directly to the SCN. The central clock entrains the peripheral clocks through neuronal and hormonal signals, body temperature and feeding-related cues, aligning all clocks with the external light/dark cycle. Circadian rhythms allow an organism to achieve temporal homeostasis with its environment at the molecular level by regulating gene expression to create a peak of protein expression once every 24 hours to control when a particular physiological process is most active with respect to the solar day. Transcription and translation of core clock components (CLOCK, NPAS2, BMAL1, BMAL2, PER1, PER2, PER3, CRY1 and CRY2) plays a critical role in rhythm generation, whereas delays imposed by post-translational modifications (PTMs) are important for determining the period (tau) of the rhythms (tau refers to the period of a rhythm and is the length, in time, of one complete cycle). A diurnal rhythm is synchronized with the day/night cycle, while the ultradian and infradian rhythms have a period shorter and longer than 24 hours, respectively. Disruptions in the circadian rhythms contribute to the pathology of cardiovascular diseases, cancer, metabolic syndromes and aging. A transcription/translation feedback loop (TTFL) forms the core of the molecular circadian clock mechanism. Transcription factors, CLOCK or NPAS2 and BMAL1 or BMAL2, form the positive limb of the feedback loop, act in the form of a heterodimer and activate the transcription of core clock genes and clock-controlled genes (involved in key metabolic processes), harboring E-box elements (5'-CACGTG-3') within their promoters. The core clock genes: PER1/2/3 and CRY1/2 which are transcriptional repressors form the negative limb of the feedback loop and interact with the CLOCK|NPAS2-BMAL1|BMAL2 heterodimer inhibiting its activity and thereby negatively regulating their own expression. This heterodimer also activates nuclear receptors NR1D1/2 and RORA/B/G, which form a second feedback loop and which activate and repress BMAL1 transcription, respectively. BMAL1 positively regulates myogenesis and negatively regulates adipogenesis via the transcriptional control of the genes of the canonical Wnt signaling pathway. Plays a role in normal pancreatic beta-cell function; regulates glucose-stimulated insulin secretion via the regulation of antioxidant genes NFE2L2/NRF2 and its targets SESN2, PRDX3, CCLC and CCLM. Negatively regulates the mTORC1 signaling pathway; regulates the expression of MTOR and DEPTOR. Controls diurnal oscillations of Ly6C inflammatory monocytes; rhythmic recruitment of the PRC2 complex imparts diurnal variation to chemokine expression that is necessary to sustain Ly6C monocyte rhythms. Regulates the expression of HSD3B2, STAR, PTGS2, CYP11A1, CYP19A1 and LHCGR in the ovary and also the genes involved in hair growth. Plays an important role in adult hippocampal neurogenesis by regulating the timely entry of neural stem/progenitor cells (NSPCs) into the cell cycle and the number of cell divisions that take place prior to cell-cycle exit. Regulates the circadian expression of CIART and KLF11. The CLOCK-BMAL1 heterodimer regulates the circadian expression of SERPINE1/PAI1, VWF, B3, CCRN4L/NOC, NAMPT, DBP, MYOD1, PPARGC1A, PPARGC1B, SIRT1, GYS2, F7, NGFR, GNRHR, BHLHE40/DEC1, ATF4, MTA1, KLF10 and also genes implicated in glucose and lipid metabolism. Promotes rhythmic chromatin opening, regulating the DNA accessibility of other transcription factors. The NPAS2-BMAL1 heterodimer positively regulates the expression of MAOA, F7 and LDHA and modulates the circadian rhythm of daytime contrast sensitivity by regulating the rhythmic expression of adenylate cyclase type 1 (ADCY1) in the retina. The preferred binding motif for the CLOCK-BMAL1 heterodimer is 5'-CACGTGA-3', which contains a flanking adenine nucleotide at the 3-prime end of the canonical 6-nucleotide E-box sequence. CLOCK specifically binds to the half-site 5'-CAC-3', while BMAL1 binds to the half-site 5'-GTGA-3'. The CLOCK-BMAL1 heterodimer also recognizes the non-canonical E-box motifs 5'-AACGTGA-3' and 5'-CATGTGA-3'. Essential for the rhythmic interaction of CLOCK with ASS1 and plays a critical role in positively regulating CLOCK-mediated acetylation of ASS1. Plays a role in protecting against lethal sepsis by limiting the expression of immune checkpoint protein CD274 in macrophages in a PKM2-dependent manner. Regulates the diurnal rhythms of skeletal muscle metabolism via transcriptional activation of genes promoting triglyceride synthesis (DGAT2) and metabolic efficiency (COQ10B). This is Basic helix-loop-helix ARNT-like protein 1 (BMAL1) from Pongo abelii (Sumatran orangutan).